Consider the following 293-residue polypeptide: MATH domain and coiled-coil domain-containing protein At3g58400 (293 aa).

Positions 3–126 (RSRSQNLITE…NGELKIVAEI (124 aa)) constitute an MATH domain. The stretch at 227–285 (KLDWLENKLYEVAQKKEDDEAGETRLREMEEKLKDLKLKCSKMEALVEEEKAKVSAAKA) forms a coiled coil.

The polypeptide is MATH domain and coiled-coil domain-containing protein At3g58400 (Arabidopsis thaliana (Mouse-ear cress)).